The chain runs to 449 residues: Exodeoxyribonuclease 7 large subunit (449 aa).

This sequence belongs to the XseA family. As to quaternary structure, heterooligomer composed of large and small subunits.

Its subcellular location is the cytoplasm. The catalysed reaction is Exonucleolytic cleavage in either 5'- to 3'- or 3'- to 5'-direction to yield nucleoside 5'-phosphates.. Functionally, bidirectionally degrades single-stranded DNA into large acid-insoluble oligonucleotides, which are then degraded further into small acid-soluble oligonucleotides. The chain is Exodeoxyribonuclease 7 large subunit from Aliivibrio fischeri (strain ATCC 700601 / ES114) (Vibrio fischeri).